The sequence spans 92 residues: MARSLKKGPFADEHLLKKVDAILEGKMPKKPIKTWSRRSTIFPSFIGLTFQVHNGHQHIDVYVTDDMVGHKLGEFVPTRTYSGHGAEKGKKK.

This sequence belongs to the universal ribosomal protein uS19 family.

Its function is as follows. Protein S19 forms a complex with S13 that binds strongly to the 16S ribosomal RNA. This Mycoplasmopsis agalactiae (strain NCTC 10123 / CIP 59.7 / PG2) (Mycoplasma agalactiae) protein is Small ribosomal subunit protein uS19.